Reading from the N-terminus, the 114-residue chain is Histone H3-6 (114 aa).

A compositionally biased stretch (basic residues) spans 1–17; sequence NTGGKAPRKHIAHKQAK. The tract at residues 1-32 is disordered; the sequence is NTGGKAPRKHIAHKQAKKSSAAAATGGVKKPH. Residues 18–28 are compositionally biased toward low complexity; sequence KSSAAAATGGV.

The protein belongs to the histone H3 family. As to quaternary structure, the nucleosome is a histone octamer containing two molecules each of H2A, H2B, H3 and H4 assembled in one H3-H4 heterotetramer and two H2A-H2B heterodimers. The octamer wraps approximately 147 bp of DNA.

The protein localises to the nucleus. Its subcellular location is the chromosome. Its function is as follows. Core component of nucleosome. Nucleosomes wrap and compact DNA into chromatin, limiting DNA accessibility to the cellular machineries which require DNA as a template. Histones thereby play a central role in transcription regulation, DNA repair, DNA replication and chromosomal stability. DNA accessibility is regulated via a complex set of post-translational modifications of histones, also called histone code, and nucleosome remodeling. This Stylonychia lemnae (Ciliate) protein is Histone H3-6 (H3-6).